The chain runs to 189 residues: ATP synthase subunit b 1 (189 aa).

The chain crosses the membrane as a helical span at residues 32 to 52; the sequence is TYFASQLFWLTIAFVILYIAL.

This sequence belongs to the ATPase B chain family. F-type ATPases have 2 components, F(1) - the catalytic core - and F(0) - the membrane proton channel. F(1) has five subunits: alpha(3), beta(3), gamma(1), delta(1), epsilon(1). F(0) has three main subunits: a(1), b(2) and c(10-14). The alpha and beta chains form an alternating ring which encloses part of the gamma chain. F(1) is attached to F(0) by a central stalk formed by the gamma and epsilon chains, while a peripheral stalk is formed by the delta and b chains.

The protein resides in the cell inner membrane. F(1)F(0) ATP synthase produces ATP from ADP in the presence of a proton or sodium gradient. F-type ATPases consist of two structural domains, F(1) containing the extramembraneous catalytic core and F(0) containing the membrane proton channel, linked together by a central stalk and a peripheral stalk. During catalysis, ATP synthesis in the catalytic domain of F(1) is coupled via a rotary mechanism of the central stalk subunits to proton translocation. In terms of biological role, component of the F(0) channel, it forms part of the peripheral stalk, linking F(1) to F(0). This chain is ATP synthase subunit b 1, found in Maricaulis maris (strain MCS10) (Caulobacter maris).